The primary structure comprises 134 residues: Profilin-2 (134 aa).

Residues C13 and C118 are joined by a disulfide bond. The Involved in PIP2 interaction signature appears at 84–100 (AVIRGKKGAGGITIKKT). Phosphothreonine is present on T114.

It belongs to the profilin family. In terms of assembly, occurs in many kinds of cells as a complex with monomeric actin in a 1:1 ratio. Post-translationally, phosphorylated by MAP kinases.

The protein resides in the cytoplasm. Its subcellular location is the cytoskeleton. Binds to actin and affects the structure of the cytoskeleton. At high concentrations, profilin prevents the polymerization of actin, whereas it enhances it at low concentrations. The sequence is that of Profilin-2 from Olea europaea (Common olive).